Reading from the N-terminus, the 757-residue chain is Polyribonucleotide nucleotidyltransferase (757 aa).

The Mg(2+) site is built by aspartate 489 and aspartate 495. Residues 556–615 (PKILCYKIDKDVVHKVIGSGGKTIRGISSDTSAKIDIDQNNYVYIMADTEEALMEAKTRV) enclose the KH domain. In terms of domain architecture, S1 motif spans 632–700 (GELYDGKIVS…SDGKIKLTMR (69 aa)). The tract at residues 702–757 (DEDRVGSGGSSSSPKKRFGAHPRKNGKDNRSNNSERGFNERSGSAEGSSISRKRFF) is disordered. Over residues 715-725 (PKKRFGAHPRK) the composition is skewed to basic residues. Polar residues predominate over residues 732–751 (SNNSERGFNERSGSAEGSSI).

The protein belongs to the polyribonucleotide nucleotidyltransferase family. Mg(2+) serves as cofactor.

The protein resides in the cytoplasm. The enzyme catalyses RNA(n+1) + phosphate = RNA(n) + a ribonucleoside 5'-diphosphate. Its function is as follows. Involved in mRNA degradation. Catalyzes the phosphorolysis of single-stranded polyribonucleotides processively in the 3'- to 5'-direction. This is Polyribonucleotide nucleotidyltransferase from Neorickettsia sennetsu (strain ATCC VR-367 / Miyayama) (Ehrlichia sennetsu).